Consider the following 793-residue polypeptide: Kinesin-like protein KIN-14C (793 aa).

Positions 1–43 are disordered; it reads MASRNQNRPPRSPNAKKEGLGGISFDKRRKVETQGGTGRRQAF. The globular stretch occupies residues 1-69; that stretch reads MASRNQNRPP…IEECGKVDFT (69 aa). Over residues 15-32 the composition is skewed to basic and acidic residues; it reads AKKEGLGGISFDKRRKVE. Residues 120 to 375 are a coiled coil; it reads KENLKVSLES…EQQLAIANER (256 aa). Positions 431–772 constitute a Kinesin motor domain; that stretch reads NIRVFCRVRP…LRFAARVNAC (342 aa). 516-523 is an ATP binding site; the sequence is GQTGSGKT.

This sequence belongs to the TRAFAC class myosin-kinesin ATPase superfamily. Kinesin family. KIN-14 subfamily.

Its subcellular location is the cytoplasm. It is found in the cytoskeleton. The protein localises to the spindle. The protein resides in the phragmoplast. It localises to the chromosome. Its subcellular location is the centromere. It is found in the kinetochore. Its function is as follows. Kinesin that supports microtubule movement in an ATP-dependent manner and has a minus-end directed polarity. Plays a crucial role in spindle morphogenesis in male meiosis. In mitosis, is required for normal microtubule accumulation at the spindle poles during prophase and may play a role in spindle assembly during prometaphase. This is Kinesin-like protein KIN-14C from Arabidopsis thaliana (Mouse-ear cress).